Consider the following 546-residue polypeptide: CTP synthase (546 aa).

Residues 1 to 264 form an amidoligase domain region; it reads MRYIVVTGGV…TKYIMKAMRL (264 aa). S12 lines the CTP pocket. UTP is bound at residue S12. ATP contacts are provided by residues 13–18 and D70; that span reads GLGKGI. Residues D70 and E140 each contribute to the Mg(2+) site. CTP contacts are provided by residues 147–149, 185–190, and K221; these read DIE and KTKPTQ. UTP contacts are provided by residues 185–190 and K221; that span reads KTKPTQ. A Glutamine amidotransferase type-1 domain is found at 298-534; that stretch reads GSQCTDPMKD…VEAMKAQRLR (237 aa). L-glutamine is bound at residue G357. Catalysis depends on C384, which acts as the Nucleophile; for glutamine hydrolysis. L-glutamine contacts are provided by residues 385-388, E408, and R464; that span reads FGMQ. Active-site residues include H507 and E509.

This sequence belongs to the CTP synthase family. Homotetramer.

It carries out the reaction UTP + L-glutamine + ATP + H2O = CTP + L-glutamate + ADP + phosphate + 2 H(+). It catalyses the reaction L-glutamine + H2O = L-glutamate + NH4(+). The catalysed reaction is UTP + NH4(+) + ATP = CTP + ADP + phosphate + 2 H(+). It functions in the pathway pyrimidine metabolism; CTP biosynthesis via de novo pathway; CTP from UDP: step 2/2. Allosterically activated by GTP, when glutamine is the substrate; GTP has no effect on the reaction when ammonia is the substrate. The allosteric effector GTP functions by stabilizing the protein conformation that binds the tetrahedral intermediate(s) formed during glutamine hydrolysis. Inhibited by the product CTP, via allosteric rather than competitive inhibition. Catalyzes the ATP-dependent amination of UTP to CTP with either L-glutamine or ammonia as the source of nitrogen. Regulates intracellular CTP levels through interactions with the four ribonucleotide triphosphates. The polypeptide is CTP synthase (Methanothrix thermoacetophila (strain DSM 6194 / JCM 14653 / NBRC 101360 / PT) (Methanosaeta thermophila)).